We begin with the raw amino-acid sequence, 1577 residues long: MAP kinase-activating death domain protein (1577 aa).

In terms of domain architecture, uDENN spans 13-267; the sequence is YLVIVGARHP…VPVSGQKRVD (255 aa). Residues 106-121 show a composition bias toward basic and acidic residues; that stretch reads KEKVEGGAGPRGKEGA. A disordered region spans residues 106–166; the sequence is KEKVEGGAGP…WGKRRAKAGS (61 aa). Residues 123–140 show a composition bias toward low complexity; that stretch reads TSGASEEAATGSSESGST. The segment covering 141 to 156 has biased composition (polar residues); it reads LQPPSADSTPDINQSP. Ser-155 bears the Phosphoserine mark. Residues 288–428 enclose the cDENN domain; sequence RFTLVDFPLH…ESLELKKHLK (141 aa). One can recognise a dDENN domain in the interval 430 to 564; it reads ALASMSLNTQ…LNPSNYAFQR (135 aa). Disordered stretches follow at residues 604 to 635 and 676 to 840; these read LSVPPERDSDSDPTEDSGSDSQDYDDSSSSYS and QPQK…NSTE. The span at 614–629 shows a compositional bias: acidic residues; sequence SDPTEDSGSDSQDYDD. Residues Ser-688 and Ser-691 each carry the phosphoserine modification. The segment covering 688 to 698 has biased composition (polar residues); sequence SENSQENPPLR. Positions 699–715 are enriched in low complexity; it reads SSSSTTASSSPSTVVHS. Residues 793–803 show a composition bias toward polar residues; that stretch reads PRFSQHVSGSR. Phosphoserine occurs at positions 812, 817, and 819. The span at 826–839 shows a compositional bias: low complexity; the sequence is RASSPNSTVSNNST. Ser-857, Ser-861, Ser-915, Ser-920, Ser-929, and Ser-1058 each carry phosphoserine. 3 disordered regions span residues 912 to 940, 1050 to 1109, and 1127 to 1272; these read QKSSVIKHSPTVKREPSSPQGRSSNSSEN, KEPD…DTRS, and EVKK…RSSE. Low complexity predominate over residues 928–938; the sequence is SSPQGRSSNSS. 2 positions are modified to phosphothreonine: Thr-1060 and Thr-1065. Residue Ser-1109 is modified to Phosphoserine. Residues 1127-1141 show a composition bias toward basic and acidic residues; sequence EVKKQKALEKQRPEG. Positions 1157–1172 are enriched in polar residues; that stretch reads QMSADSGVSLTSASQR. Residues 1189 to 1203 are compositionally biased toward low complexity; it reads SSSQDSEVSTVSNSS. A compositionally biased stretch (polar residues) spans 1232 to 1248; it reads SRATLSDSEIETNSATS. Thr-1235 bears the Phosphothreonine mark. Phosphoserine occurs at positions 1237 and 1266. The region spanning 1336-1411 is the Death domain; sequence GMDQGPQEMI…GLVYSQQVNE (76 aa).

Belongs to the MADD family. As to quaternary structure, interacts (via death domain) with TNFRSF1A (via death domain). Interacts with PIDD1. Interacts with YWHAZ. Interacts (via death domain) with KIF1B; links the motor KIF1B to Rab3-carrying vesicles in anterograde synaptic vesicle transport. Interacts with KIF1A. Interacts (via uDENN domain) with RAB3A, RAB3B, RAB3C and RAB3D; the GTP-bound form of the Rab proteins is preferred for interaction. In terms of tissue distribution, expressed in the brain.

It is found in the cell membrane. It localises to the cytoplasm. Its subcellular location is the cell projection. The protein localises to the axon. In terms of biological role, guanyl-nucleotide exchange factor that regulates small GTPases of the Rab family. Converts GDP-bound inactive form of RAB27A and RAB27B to the GTP-bound active forms. Converts GDP-bound inactive form of RAB3A, RAB3C and RAB3D to the GTP-bound active forms, GTPases involved in synaptic vesicle exocytosis and vesicle secretion. Plays a role in synaptic vesicle formation and in vesicle trafficking at the neuromuscular junction. Involved in up-regulating a post-docking step of synaptic exocytosis in central synapses. Probably by binding to the motor proteins KIF1B and KIF1A, mediates motor-dependent transport of GTP-RAB3A-positive vesicles to the presynaptic nerve terminals. Plays a role in TNFA-mediated activation of the MAPK pathway, including ERK1/2. May link TNFRSF1A with MAP kinase activation. May be involved in the regulation of TNFA-induced apoptosis. The chain is MAP kinase-activating death domain protein from Mus musculus (Mouse).